A 391-amino-acid polypeptide reads, in one-letter code: Sister chromatid cohesion protein DCC1 (391 aa).

The protein belongs to the DCC1 family. Component of the ctf18-RFC complex which consists of ctf18, ctf8, dscc1 and the RFC complex.

The protein resides in the nucleus. Functionally, loads pcna onto primed templates regulating velocity, spacing and restart activity of replication forks. May couple DNA replication to sister chromatid cohesion. This chain is Sister chromatid cohesion protein DCC1 (dscc1), found in Danio rerio (Zebrafish).